The primary structure comprises 282 residues: Shikimate dehydrogenase (NADP(+)) (282 aa).

Residues 15–17 (SKS) and T62 contribute to the shikimate site. The active-site Proton acceptor is the K66. Residues N87 and D103 each contribute to the shikimate site. Residues 128 to 132 (GAGGA), 152 to 157 (NRTPAK), and M216 each bind NADP(+). Y218 is a shikimate binding site. Residue G240 participates in NADP(+) binding.

This sequence belongs to the shikimate dehydrogenase family. As to quaternary structure, homodimer.

It catalyses the reaction shikimate + NADP(+) = 3-dehydroshikimate + NADPH + H(+). Its pathway is metabolic intermediate biosynthesis; chorismate biosynthesis; chorismate from D-erythrose 4-phosphate and phosphoenolpyruvate: step 4/7. In terms of biological role, involved in the biosynthesis of the chorismate, which leads to the biosynthesis of aromatic amino acids. Catalyzes the reversible NADPH linked reduction of 3-dehydroshikimate (DHSA) to yield shikimate (SA). The polypeptide is Shikimate dehydrogenase (NADP(+)) (Nitrosococcus oceani (strain ATCC 19707 / BCRC 17464 / JCM 30415 / NCIMB 11848 / C-107)).